Here is a 151-residue protein sequence, read N- to C-terminus: Transcriptional repressor NrdR (151 aa).

A zinc finger lies at 3–34 (CPFCSHPDTQVVETREAEDGGFIRRRRQCGGC). The 91-residue stretch at 49–139 (PAIVKKDGRR…VYRSFEDVDD (91 aa)) folds into the ATP-cone domain.

Belongs to the NrdR family. Zn(2+) is required as a cofactor.

Functionally, negatively regulates transcription of bacterial ribonucleotide reductase nrd genes and operons by binding to NrdR-boxes. This is Transcriptional repressor NrdR from Delftia acidovorans (strain DSM 14801 / SPH-1).